A 231-amino-acid polypeptide reads, in one-letter code: Cuticlin 2 (231 aa).

A signal peptide spans 1-16 (MQKLIVFFTTIAAAQA). 12 repeat units span residues 75 to 78 (AAPI), 79 to 82 (AAPA), 90 to 93 (AAPV), 105 to 108 (AAPI), 114 to 117 (AAPA), 121 to 124 (AAPV), 137 to 140 (AAPA), 153 to 156 (AAPA), 169 to 172 (AAPA), 192 to 195 (AAPA), 208 to 211 (AAPA), and 218 to 221 (AAPA). A 12 X 4 AA repeats of A-A-P-[AVI] region spans residues 75–221 (AAPIAAPAGG…AGGYQAAAPA (147 aa)).

In terms of processing, tyrosine residues can be cross-linked in vitro, leading to the formation of insoluble high molecular-weight complexes.

Its subcellular location is the secreted. Component of the insoluble part of the cuticles. The sequence is that of Cuticlin 2 from Caenorhabditis elegans.